The primary structure comprises 103 residues: Small ribosomal subunit protein uS10 (103 aa).

The protein belongs to the universal ribosomal protein uS10 family. Part of the 30S ribosomal subunit.

Its function is as follows. Involved in the binding of tRNA to the ribosomes. In Shewanella halifaxensis (strain HAW-EB4), this protein is Small ribosomal subunit protein uS10.